Here is a 344-residue protein sequence, read N- to C-terminus: Probable dual-specificity RNA methyltransferase RlmN (344 aa).

Residue glutamate 83 is the Proton acceptor of the active site. The Radical SAM core domain occupies 89-323 (YLDRKTICVS…VSVRRSRGKD (235 aa)). Cysteine 96 and cysteine 328 are joined by a disulfide. [4Fe-4S] cluster contacts are provided by cysteine 103, cysteine 107, and cysteine 110. Residues 153–154 (GE), serine 185, 209–211 (SLH), and asparagine 285 each bind S-adenosyl-L-methionine. Cysteine 328 acts as the S-methylcysteine intermediate in catalysis.

This sequence belongs to the radical SAM superfamily. RlmN family. It depends on [4Fe-4S] cluster as a cofactor.

Its subcellular location is the cytoplasm. It carries out the reaction adenosine(2503) in 23S rRNA + 2 reduced [2Fe-2S]-[ferredoxin] + 2 S-adenosyl-L-methionine = 2-methyladenosine(2503) in 23S rRNA + 5'-deoxyadenosine + L-methionine + 2 oxidized [2Fe-2S]-[ferredoxin] + S-adenosyl-L-homocysteine. The enzyme catalyses adenosine(37) in tRNA + 2 reduced [2Fe-2S]-[ferredoxin] + 2 S-adenosyl-L-methionine = 2-methyladenosine(37) in tRNA + 5'-deoxyadenosine + L-methionine + 2 oxidized [2Fe-2S]-[ferredoxin] + S-adenosyl-L-homocysteine. Functionally, specifically methylates position 2 of adenine 2503 in 23S rRNA and position 2 of adenine 37 in tRNAs. In Deinococcus geothermalis (strain DSM 11300 / CIP 105573 / AG-3a), this protein is Probable dual-specificity RNA methyltransferase RlmN.